A 149-amino-acid polypeptide reads, in one-letter code: MNLQNNVLNQIHQILLPTNPTLDKPNAEATKEEFSSAENRDEKDYLTNQQPKNLSTPSTSSNGEFIPHIFYSLHQIRKDPNNLSNQLETLTGSIRHRLKLCKSLISENEDTKDLLSKSPSEWQDIIHQREQELQIKRDVLDDLYRKLQR.

Positions 18–64 (TNPTLDKPNAEATKEEFSSAENRDEKDYLTNQQPKNLSTPSTSSNGE) are disordered. The span at 25-45 (PNAEATKEEFSSAENRDEKDY) shows a compositional bias: basic and acidic residues. The segment covering 46 to 63 (LTNQQPKNLSTPSTSSNG) has biased composition (polar residues). 2 short sequence motifs (nuclear localization signal) span residues 77–99 (RKDP…HRLK) and 136–149 (KRDV…KLQR).

Belongs to the Mediator complex subunit 9 family. As to quaternary structure, component of the Mediator complex, which is composed of at least 21 subunits that form three structurally distinct submodules. The Mediator head module contains MED6, MED8, MED11, SRB4/MED17, SRB5/MED18, ROX3/MED19, SRB2/MED20 and SRB6/MED22, the middle module contains MED1, MED4, NUT1/MED5, MED7, CSE2/MED9, NUT2/MED10, SRB7/MED21 and SOH1/MED31, and the tail module contains MED2, PGD1/MED3, RGR1/MED14, GAL11/MED15 and SIN4/MED16. The head and the middle modules interact directly with RNA polymerase II, whereas the elongated tail module interacts with gene-specific regulatory proteins. CSE2/MED9 interacts directly with MED4.

Its subcellular location is the nucleus. In terms of biological role, component of the Mediator complex, a coactivator involved in the regulated transcription of nearly all RNA polymerase II-dependent genes. Mediator functions as a bridge to convey information from gene-specific regulatory proteins to the basal RNA polymerase II transcription machinery. The Mediator complex, having a compact conformation in its free form, is recruited to promoters by direct interactions with regulatory proteins and serves for the assembly of a functional preinitiation complex with RNA polymerase II and the general transcription factors. The Mediator complex unfolds to an extended conformation and partially surrounds RNA polymerase II, specifically interacting with the unphosphorylated form of the C-terminal domain (CTD) of RNA polymerase II. The Mediator complex dissociates from the RNA polymerase II holoenzyme and stays at the promoter when transcriptional elongation begins. In Saccharomyces cerevisiae (strain ATCC 204508 / S288c) (Baker's yeast), this protein is Mediator of RNA polymerase II transcription subunit 9 (CSE2).